A 128-amino-acid chain; its full sequence is Sulfurtransferase TusD (128 aa).

The Cysteine persulfide intermediate role is filled by Cys-78.

It belongs to the DsrE/TusD family. As to quaternary structure, heterohexamer, formed by a dimer of trimers. The hexameric TusBCD complex contains 2 copies each of TusB, TusC and TusD. The TusBCD complex interacts with TusE.

The protein localises to the cytoplasm. Its function is as follows. Part of a sulfur-relay system required for 2-thiolation of 5-methylaminomethyl-2-thiouridine (mnm(5)s(2)U) at tRNA wobble positions. Accepts sulfur from TusA and transfers it in turn to TusE. In Salmonella dublin (strain CT_02021853), this protein is Sulfurtransferase TusD.